The following is a 761-amino-acid chain: Hyperosmolality-gated Ca2+ permeable channel 1.6 (761 aa).

The next 10 membrane-spanning stretches (helical) occupy residues 7–27 (IGVA…AFAI), 101–121 (IYLL…TTMV), 156–176 (PRFW…CFIL), 375–395 (LIVG…IAFV), 419–439 (LLKS…FLLF), 467–487 (FYMF…TAFQ), 512–532 (ATFF…GEIL), 583–603 (AAVS…AFVV), 630–650 (VVTA…TKHA), and 653–673 (STPL…HCKN). A compositionally biased stretch (basic and acidic residues) spans 718–731 (RVGEDPEPEEKLES). A disordered region spans residues 718 to 761 (RVGEDPEPEEKLESDMSPPDLVATKRWSWRNTPLPSKDSCREIP).

It belongs to the CSC1 (TC 1.A.17) family.

The protein resides in the membrane. Functionally, acts as an osmosensitive calcium-permeable cation channel. This is Hyperosmolality-gated Ca2+ permeable channel 1.6 from Arabidopsis thaliana (Mouse-ear cress).